We begin with the raw amino-acid sequence, 145 residues long: Basic phospholipase A2 PC14 (145 aa).

The signal sequence occupies residues 1-21; that stretch reads MYPAHLLLLLAVCVSLLGASA. Positions 22–27 are excised as a propeptide; that stretch reads IPPLPL. Cystine bridges form between C38/C98, C54/C144, C56/C72, C71/C125, C78/C118, C87/C111, and C105/C116. Ca(2+)-binding residues include Y55, G57, and G59. H75 is a catalytic residue. Ca(2+) is bound at residue D76. D119 is an active-site residue.

The protein belongs to the phospholipase A2 family. Group I subfamily. D49 sub-subfamily. It depends on Ca(2+) as a cofactor.

It is found in the secreted. It catalyses the reaction a 1,2-diacyl-sn-glycero-3-phosphocholine + H2O = a 1-acyl-sn-glycero-3-phosphocholine + a fatty acid + H(+). PLA2 catalyzes the calcium-dependent hydrolysis of the 2-acyl groups in 3-sn-phosphoglycerides. The protein is Basic phospholipase A2 PC14 of Laticauda laticaudata (Blue-ringed sea krait).